The sequence spans 328 residues: tRNA methyltransferase 10 homolog A (328 aa).

Disordered stretches follow at residues 1–91 (MSSE…RKRV) and 281–328 (HKAC…PVLQ). Ser22 carries the post-translational modification Phosphoserine. Residues 43–83 (RQLKKLMKQKQWEEQREQRKEKRKEKRKRKKLERRQLESNS) are a coiled coil. Residues 52–62 (KQWEEQREQRK) show a composition bias toward basic and acidic residues. A compositionally biased stretch (basic residues) spans 63–75 (EKRKEKRKRKKLE). One can recognise an SAM-dependent MTase TRM10-type domain in the interval 88-278 (RKRVRRDVAR…TILPQRKGAV (191 aa)). Residues 305–319 (ESCRDNPDSPQKDEQ) show a composition bias toward basic and acidic residues.

This sequence belongs to the class IV-like SAM-binding methyltransferase superfamily. TRM10 family. In terms of assembly, interacts with tRNA.

It is found in the nucleus. The protein resides in the nucleolus. The enzyme catalyses guanosine(9) in tRNA + S-adenosyl-L-methionine = N(1)-methylguanosine(9) in tRNA + S-adenosyl-L-homocysteine + H(+). Its function is as follows. S-adenosyl-L-methionine-dependent guanine N(1)-methyltransferase that catalyzes the formation of N(1)-methylguanine at position 9 (m1G9) in tRNAs. Probably not able to catalyze formation of N(1)-methyladenine at position 9 (m1A9) in tRNAs. In Mus musculus (Mouse), this protein is tRNA methyltransferase 10 homolog A (Trmt10a).